Here is a 140-residue protein sequence, read N- to C-terminus: MAQGRRVERVAALIRKEVSELMINGIRDERVHHGMVSITEVEVSGDLQHCKIFVSVFGEAQERDQVLEGLQAASGFLRGELGRRLQMRRAPEVVFQLDRGLERGTSVLGLLNRLEDERQQRGDIPPGSDQQPGSDEQPTG.

Positions 115–140 (EDERQQRGDIPPGSDQQPGSDEQPTG) are disordered. Over residues 128-140 (SDQQPGSDEQPTG) the composition is skewed to polar residues.

The protein belongs to the RbfA family. In terms of assembly, monomer. Binds 30S ribosomal subunits, but not 50S ribosomal subunits or 70S ribosomes.

The protein localises to the cytoplasm. In terms of biological role, one of several proteins that assist in the late maturation steps of the functional core of the 30S ribosomal subunit. Associates with free 30S ribosomal subunits (but not with 30S subunits that are part of 70S ribosomes or polysomes). Required for efficient processing of 16S rRNA. May interact with the 5'-terminal helix region of 16S rRNA. This Synechococcus sp. (strain CC9605) protein is Ribosome-binding factor A.